Consider the following 476-residue polypeptide: Hydrogenase-4 component F homolog (476 aa).

Helical transmembrane passes span 1-21 (MSAA…SQIS), 25-45 (ISSW…LFLL), 54-74 (FFLV…IGFT), 120-140 (IGLM…MVGI), 153-173 (YFIL…LFYI), 202-222 (LVNI…GLFP), 235-255 (PTPI…YAIL), 270-290 (AGPL…LMFY), 307-327 (MGII…AGLL), 368-388 (LGWG…MGVF), 402-422 (SPLL…ALIL), and 442-462 (LYLP…YIPP).

It belongs to the complex I subunit 5 family.

The protein resides in the cell inner membrane. This Methylacidiphilum infernorum (isolate V4) (Methylokorus infernorum (strain V4)) protein is Hydrogenase-4 component F homolog (hyfF).